The sequence spans 126 residues: Small ribosomal subunit protein uS12 (126 aa).

A disordered region spans residues 1–28 (MPTINQLVRKGRRKVRTKSKSPALDGNP). Residues 9-19 (RKGRRKVRTKS) are compositionally biased toward basic residues. Position 89 is a 3-methylthioaspartic acid (Asp-89). The segment at 106–126 (GVEKRRRSRSKYGVKRPKAAK) is disordered. Basic residues predominate over residues 109 to 126 (KRRRSRSKYGVKRPKAAK).

This sequence belongs to the universal ribosomal protein uS12 family. As to quaternary structure, part of the 30S ribosomal subunit. Contacts proteins S8 and S17. May interact with IF1 in the 30S initiation complex.

With S4 and S5 plays an important role in translational accuracy. Functionally, interacts with and stabilizes bases of the 16S rRNA that are involved in tRNA selection in the A site and with the mRNA backbone. Located at the interface of the 30S and 50S subunits, it traverses the body of the 30S subunit contacting proteins on the other side and probably holding the rRNA structure together. The combined cluster of proteins S8, S12 and S17 appears to hold together the shoulder and platform of the 30S subunit. This Opitutus terrae (strain DSM 11246 / JCM 15787 / PB90-1) protein is Small ribosomal subunit protein uS12.